The primary structure comprises 114 residues: Large ribosomal subunit protein bL21 (114 aa).

Belongs to the bacterial ribosomal protein bL21 family. In terms of assembly, part of the 50S ribosomal subunit. Contacts protein L20.

This protein binds to 23S rRNA in the presence of protein L20. The polypeptide is Large ribosomal subunit protein bL21 (Protochlamydia amoebophila (strain UWE25)).